A 443-amino-acid chain; its full sequence is Probable glycine dehydrogenase (decarboxylating) subunit 1 (443 aa).

It belongs to the GcvP family. N-terminal subunit subfamily. As to quaternary structure, the glycine cleavage system is composed of four proteins: P, T, L and H. In this organism, the P 'protein' is a heterodimer of two subunits.

The catalysed reaction is N(6)-[(R)-lipoyl]-L-lysyl-[glycine-cleavage complex H protein] + glycine + H(+) = N(6)-[(R)-S(8)-aminomethyldihydrolipoyl]-L-lysyl-[glycine-cleavage complex H protein] + CO2. The glycine cleavage system catalyzes the degradation of glycine. The P protein binds the alpha-amino group of glycine through its pyridoxal phosphate cofactor; CO(2) is released and the remaining methylamine moiety is then transferred to the lipoamide cofactor of the H protein. The polypeptide is Probable glycine dehydrogenase (decarboxylating) subunit 1 (Solidesulfovibrio magneticus (strain ATCC 700980 / DSM 13731 / RS-1) (Desulfovibrio magneticus)).